A 73-amino-acid polypeptide reads, in one-letter code: UPF0352 protein APL_0584 (73 aa).

The protein belongs to the UPF0352 family.

The protein is UPF0352 protein APL_0584 of Actinobacillus pleuropneumoniae serotype 5b (strain L20).